The following is a 216-amino-acid chain: Adenylate kinase (216 aa).

10 to 15 (GAGKGT) contributes to the ATP binding site. The interval 30–59 (STGDMFRAAMKNETALGLEAKSYIDKGELV) is NMP. AMP-binding positions include Thr-31, Arg-36, 57–59 (ELV), 85–88 (GFPR), and Gln-92. Residues 126-164 (GRFICRTCGATYHKLFNPPKVEGTCDRCGGHEFYQREDD) are LID. Arg-127 serves as a coordination point for ATP. Zn(2+) is bound by residues Cys-130 and Cys-133. 136–137 (TY) lines the ATP pocket. Cys-150 and Cys-153 together coordinate Zn(2+). AMP is bound by residues Arg-161 and Arg-172. Arg-200 contributes to the ATP binding site.

This sequence belongs to the adenylate kinase family. As to quaternary structure, monomer.

It localises to the cytoplasm. It carries out the reaction AMP + ATP = 2 ADP. It functions in the pathway purine metabolism; AMP biosynthesis via salvage pathway; AMP from ADP: step 1/1. In terms of biological role, catalyzes the reversible transfer of the terminal phosphate group between ATP and AMP. Plays an important role in cellular energy homeostasis and in adenine nucleotide metabolism. The sequence is that of Adenylate kinase from Enterococcus faecalis (strain ATCC 700802 / V583).